Consider the following 185-residue polypeptide: ATP synthase subunit delta (185 aa).

It belongs to the ATPase delta chain family. As to quaternary structure, F-type ATPases have 2 components, F(1) - the catalytic core - and F(0) - the membrane proton channel. F(1) has five subunits: alpha(3), beta(3), gamma(1), delta(1), epsilon(1). F(0) has three main subunits: a(1), b(2) and c(10-14). The alpha and beta chains form an alternating ring which encloses part of the gamma chain. F(1) is attached to F(0) by a central stalk formed by the gamma and epsilon chains, while a peripheral stalk is formed by the delta and b chains.

The protein localises to the cell inner membrane. In terms of biological role, f(1)F(0) ATP synthase produces ATP from ADP in the presence of a proton or sodium gradient. F-type ATPases consist of two structural domains, F(1) containing the extramembraneous catalytic core and F(0) containing the membrane proton channel, linked together by a central stalk and a peripheral stalk. During catalysis, ATP synthesis in the catalytic domain of F(1) is coupled via a rotary mechanism of the central stalk subunits to proton translocation. Functionally, this protein is part of the stalk that links CF(0) to CF(1). It either transmits conformational changes from CF(0) to CF(1) or is implicated in proton conduction. This Coxiella burnetii (strain CbuG_Q212) (Coxiella burnetii (strain Q212)) protein is ATP synthase subunit delta.